A 478-amino-acid chain; its full sequence is Allene oxide synthase 2 (478 aa).

K88, H119, and K123 together coordinate heme b. N278 provides a ligand contact to (13S)-hydroperoxy-(9Z,11E,15Z)-octadecatrienoate. K427 and C429 together coordinate heme b.

The protein belongs to the cytochrome P450 family. Heme b serves as cofactor. As to expression, weakly expressed in roots, shoots, leaves and flowers.

The enzyme catalyses (13S)-hydroperoxy-(9Z,11E,15Z)-octadecatrienoate = (9Z,13S,15Z)-12,13-epoxyoctadeca-9,11,15-trienoate + H2O. Its pathway is lipid metabolism; oxylipin biosynthesis. Its function is as follows. Involved in the biosynthesis of jasmonic acid, a growth regulator that is implicated also as a signaling molecule in plant defense. Converts 13-hydroperoxylinolenic acid to 12,13-epoxylinolenic acid. This Oryza sativa subsp. japonica (Rice) protein is Allene oxide synthase 2 (CYP74A2).